Consider the following 196-residue polypeptide: MSRVYVGNLDPRVTERELEDEFRSFGVIRSVWVARRPPGYAFLDFEDSRDARDAIREVDGKNGWRVEQSHNRGGGGGRGGGRGGGDGGRGRGGSDLKCYECGESGHFARECRSRGGSGGRRRSRSRSRSPPRYRKSPTYGGRRSYSPRARSPPPPRRRSPSPRGRNYSRSPPPYRARDEVPYANGNGLKDVRRSRS.

An RRM domain is found at 2 to 71; the sequence is SRVYVGNLDP…NGWRVEQSHN (70 aa). At Ser48 the chain carries Phosphoserine. Over residues 58-70 the composition is skewed to basic and acidic residues; that stretch reads VDGKNGWRVEQSH. Positions 58 to 196 are disordered; it reads VDGKNGWRVE…GLKDVRRSRS (139 aa). Residues 72-87 are compositionally biased toward gly residues; the sequence is RGGGGGRGGGRGGGDG. Positions 88–100 are enriched in basic and acidic residues; sequence GRGRGGSDLKCYE. The segment at 96–113 adopts a CCHC-type zinc-finger fold; sequence LKCYECGESGHFARECRS. Residues 119–135 are compositionally biased toward basic residues; it reads GRRRSRSRSRSPPRYRK. A phosphoserine mark is found at Ser136, Ser144, Ser146, Ser151, Ser159, Ser170, and Ser196. The segment covering 139-149 has biased composition (low complexity); that stretch reads YGGRRSYSPRA.

It belongs to the splicing factor SR family. RSZ subfamily. As to quaternary structure, component of the spliceosome. In terms of processing, extensively phosphorylated on serine residues in the RS domain.

The protein resides in the nucleus. Probably involved in intron recognition and spliceosome assembly. This is Serine/arginine-rich splicing factor RSZ22A (RSZ22A) from Arabidopsis thaliana (Mouse-ear cress).